A 366-amino-acid polypeptide reads, in one-letter code: Protein FAM131A (366 aa).

Positions 342 to 366 (QRQASDLASSGVVSLDEDEAEPEEQ) are disordered. Residues 356–366 (LDEDEAEPEEQ) show a composition bias toward acidic residues.

This sequence belongs to the FAM131 family.

The chain is Protein FAM131A (FAM131A) from Homo sapiens (Human).